The chain runs to 214 residues: uncharacterized protein (214 aa).

Transmembrane regions (helical) follow at residues 18–38 (LLLL…NTFV), 51–71 (DLAL…IVAG), 80–100 (ILVL…VLLV), 108–128 (LLVL…AFNV), and 145–165 (FFGV…GYII).

The protein resides in the cell membrane. This is an uncharacterized protein from Geobacillus stearothermophilus (Bacillus stearothermophilus).